A 305-amino-acid chain; its full sequence is tRNA pseudouridine synthase B (305 aa).

The active-site Nucleophile is the Asp-39.

Belongs to the pseudouridine synthase TruB family. Type 1 subfamily.

It carries out the reaction uridine(55) in tRNA = pseudouridine(55) in tRNA. Functionally, responsible for synthesis of pseudouridine from uracil-55 in the psi GC loop of transfer RNAs. The protein is tRNA pseudouridine synthase B of Staphylococcus aureus (strain MSSA476).